The primary structure comprises 1038 residues: Importin-7 (1038 aa).

Met1 bears the N-acetylmethionine mark. The region spanning 22 to 101 (AERQLNEAHK…RENIVEAIIH (80 aa)) is the Importin N-terminal domain. Positions 881-910 (EHENDSDDDDEAEDDDETEELGSDEDDIDE) are disordered. Acidic residues predominate over residues 884 to 910 (NDSDDDDEAEDDDETEELGSDEDDIDE). Ser886 carries the phosphoserine modification. Thr898 is modified (phosphothreonine). Residues Ser903 and Ser1020 each carry the phosphoserine modification.

The protein belongs to the importin beta family. As to quaternary structure, forms a heterodimer with KPNB1. Interacts with histone H1. Interacts with H2A, H2B, H3 and H4 histones. Interacts with SNUPN and XPO1. Interacts with RPS7 and RPL5. Interacts with RPL23A (via BIB domain). Binds directly to nuclear pore complexes. Interacts with SMAD4 and NUP93; translocates SMAD4 to the nucleus through the NPC upon BMP7 stimulation resulting in activation of SMAD4 signaling. Interacts with phosphorylated SMAD2; the interaction facilitates translocation of SMAD2 to the nucleus. Interacts with SRP19. Interacts with RUNX2; the interaction inhibits RUNX2 nuclear translocation in osteoblasts. Interacts with HDAC6, DLX3 and KLF4; the interaction facilitates HDAC6, DLX3 and KLF4 nuclear translocation in dental papilla cells. In terms of assembly, (Microbial infection) Interacts with HIV-1 reverse transcription complex integrase and rev.

The protein resides in the cytoplasm. The protein localises to the nucleus. Functions in nuclear protein import, either by acting as autonomous nuclear transport receptor or as an adapter-like protein in association with the importin-beta subunit KPNB1. Acting autonomously, is thought to serve itself as receptor for nuclear localization signals (NLS) and to promote translocation of import substrates through the nuclear pore complex (NPC) by an energy requiring, Ran-dependent mechanism. At the nucleoplasmic side of the NPC, Ran binds to importin, the importin/substrate complex dissociates and importin is re-exported from the nucleus to the cytoplasm where GTP hydrolysis releases Ran. The directionality of nuclear import is thought to be conferred by an asymmetric distribution of the GTP- and GDP-bound forms of Ran between the cytoplasm and nucleus. Mediates autonomously the nuclear import of ribosomal proteins RPL23A, RPS7 and RPL5. In association with KPNB1 mediates the nuclear import of H1 histone and the Ran-binding site of IPO7 is not required but synergizes with that of KPNB1 in importin/substrate complex dissociation. Promotes odontoblast differentiation via promoting nuclear translocation of DLX3, KLF4, SMAD2, thereby facilitating the transcription of target genes that play a role in odontoblast differentiation. Facilitates BMP4-induced translocation of SMAD1 to the nucleus and recruitment to the MSX1 gene promoter, thereby promotes the expression of the odontogenic regulator MSX1 in dental mesenchymal cells. Also promotes odontoblast differentiation by facilitating the nuclear translocation of HDAC6 and subsequent repression of RUNX2 expression. Inhibits osteoblast differentiation by inhibiting nuclear translocation of RUNX2 and therefore inhibition of RUNX2 target gene transcription. In vitro, mediates nuclear import of H2A, H2B, H3 and H4 histones. Its function is as follows. (Microbial infection) Mediates the nuclear import of HIV-1 reverse transcription complex (RTC) integrase. Binds and mediates the nuclear import of HIV-1 Rev. This chain is Importin-7 (IPO7), found in Homo sapiens (Human).